The sequence spans 355 residues: MKLSTRVTGLLNVKYPIIQAGMAGSTTPELVATVSNAGGLGTIGAGYFSSDRLEQEITYLQELTDLPYAVNLFVPSDKLYIPEKVEHMNAWLKPYRRAFNIEEPVINMTEKQQFKDAIDLVIEKGVPAVSFTFGIPEQTVIEKLKERHIKLIGTATSVEEAIANESAGMDMVIAQGSEAGGHRGAFSETASQLTPLIGTMSLVPQMVDQINIPVVAAGGIMDGRGLVASMVLGAEGVQMGTAFLTSDESGASQLYKHAISQSKETDTVVTNVITGKPARGIENEFIHKMNEYDDEIPDYPIQNQLTNALRKEAANKGNAQWTHLWSGQSPRLVQHMSAWALIENVVKQANEIMNR.

FMN is bound by residues Asn-71, Gln-175, Gly-180, Gly-219, and 238–241 (QMGT).

The protein belongs to the nitronate monooxygenase family. NMO class I subfamily. It depends on FMN as a cofactor.

It catalyses the reaction 3 propionate 3-nitronate + 3 O2 + H2O = 3 3-oxopropanoate + 2 nitrate + nitrite + H2O2 + 3 H(+). In terms of biological role, nitronate monooxygenase that uses molecular oxygen to catalyze the oxidative denitrification of alkyl nitronates. Acts on propionate 3-nitronate (P3N), the presumed physiological substrate. Probably functions in the detoxification of P3N, a metabolic poison produced by plants and fungi as a defense mechanism. The protein is Probable nitronate monooxygenase of Staphylococcus saprophyticus subsp. saprophyticus (strain ATCC 15305 / DSM 20229 / NCIMB 8711 / NCTC 7292 / S-41).